The following is a 503-amino-acid chain: Carboxyl-terminal PDZ ligand of neuronal nitric oxide synthase protein (503 aa).

One can recognise a PID domain in the interval Phe26 to Gly191. A disordered region spans residues His170 to Asp212. Residues Ser183, Ser187, Ser190, and Ser262 each carry the phosphoserine modification. Residues Leu266–Ser285 are disordered. Residues Ala319–Leu360 are a coiled coil. Ser368, Ser371, Ser398, and Ser414 each carry phosphoserine. Residues Gln491–Val503 form an interaction with NOS1 region. Residues Ile501 to Val503 carry the PDZ-binding motif.

In terms of assembly, interacts with the PDZ domain of NOS1 or the second PDZ domain of DLG4 through its C-terminus. Interacts with RASD1 and SYN1, SYN2 and SYN3 via its PID domain. Forms a ternary complex with NOS1 and RASD1. Forms a ternary complex with NOS1 and SYN1. As to expression, mainly expressed in brain. Highly expressed in accessory olfactory bulb, caudate-putamen, cerebellum, cerebral cortex, dentate gyrus of the hippocampus, islands of Calleja, olfactory bulb and supraoptic nucleus. Expressed in kidney glomeruli podocytes (at protein level).

The protein resides in the cell projection. It localises to the filopodium. The protein localises to the podosome. Adapter protein involved in neuronal nitric-oxide (NO) synthesis regulation via its association with nNOS/NOS1. The complex formed with NOS1 and synapsins is necessary for specific NO and synapsin functions at a presynaptic level. Mediates an indirect interaction between NOS1 and RASD1 leading to enhance the ability of NOS1 to activate RASD1. Competes with DLG4 for interaction with NOS1, possibly affecting NOS1 activity by regulating the interaction between NOS1 and DLG4. In kidney podocytes, plays a role in podosomes and filopodia formation through CDC42 activation. This is Carboxyl-terminal PDZ ligand of neuronal nitric oxide synthase protein from Rattus norvegicus (Rat).